Reading from the N-terminus, the 231-residue chain is Large ribosomal subunit protein uL3 (231 aa).

N5-methylglutamine is present on Gln-151.

The protein belongs to the universal ribosomal protein uL3 family. Part of the 50S ribosomal subunit. Forms a cluster with proteins L14 and L19. Methylated by PrmB.

One of the primary rRNA binding proteins, it binds directly near the 3'-end of the 23S rRNA, where it nucleates assembly of the 50S subunit. This Granulibacter bethesdensis (strain ATCC BAA-1260 / CGDNIH1) protein is Large ribosomal subunit protein uL3.